A 475-amino-acid polypeptide reads, in one-letter code: Ribulose bisphosphate carboxylase large chain (475 aa).

2 residues coordinate substrate: Asn123 and Thr173. Lys175 functions as the Proton acceptor in the catalytic mechanism. Position 177 (Lys177) interacts with substrate. 3 residues coordinate Mg(2+): Lys201, Asp203, and Glu204. Lys201 is modified (N6-carboxylysine). His294 serves as the catalytic Proton acceptor. Substrate is bound by residues Arg295, His327, and Ser379.

The protein belongs to the RuBisCO large chain family. Type I subfamily. Heterohexadecamer of 8 large chains and 8 small chains. Mg(2+) serves as cofactor.

The protein localises to the plastid. It localises to the chloroplast. It catalyses the reaction 2 (2R)-3-phosphoglycerate + 2 H(+) = D-ribulose 1,5-bisphosphate + CO2 + H2O. It carries out the reaction D-ribulose 1,5-bisphosphate + O2 = 2-phosphoglycolate + (2R)-3-phosphoglycerate + 2 H(+). Functionally, ruBisCO catalyzes two reactions: the carboxylation of D-ribulose 1,5-bisphosphate, the primary event in carbon dioxide fixation, as well as the oxidative fragmentation of the pentose substrate in the photorespiration process. Both reactions occur simultaneously and in competition at the same active site. The protein is Ribulose bisphosphate carboxylase large chain of Bigelowiella natans (Pedinomonas minutissima).